Consider the following 670-residue polypeptide: E3 ubiquitin-protein ligase MAG2 (670 aa).

2 disordered regions span residues 1-84 (MVEP…TSTR) and 124-145 (EVER…RDEH). Over residues 20-39 (DTLNATSNSSKQGVSNNKRN) the composition is skewed to polar residues. Residues 51–66 (SDGRDNAHNYHGEGRR) are compositionally biased toward basic and acidic residues. Residues 195-250 (CSICLSEEPVAPRMVTCGHIFCLSCLLNFFSIEETVKNKETGYSKKKKYKECPLCG) form an RING-type zinc finger. The tract at residues 609–670 (TEDEKASKEN…LFSSNHQALG (62 aa)) is disordered. Residues 610–622 (EDEKASKENKEFQ) are compositionally biased toward basic and acidic residues. Positions 637–649 (VTDSTDSPPTSNG) are enriched in low complexity.

The protein belongs to the RNF10 family.

It localises to the cytoplasm. The catalysed reaction is S-ubiquitinyl-[E2 ubiquitin-conjugating enzyme]-L-cysteine + [acceptor protein]-L-lysine = [E2 ubiquitin-conjugating enzyme]-L-cysteine + N(6)-ubiquitinyl-[acceptor protein]-L-lysine.. It participates in protein modification; protein ubiquitination. Functionally, E3 ubiquitin-protein ligase involved in the degradation of non-functional 18S rRNAs in response to stalled ribosomes. Catalyzes monoubiquitination of RPS3/uS3 in response to stalled ribosomes, initiating a HEL2-dependent response that activates the degradation of non-functional 18S rRNAs. This Saccharomyces cerevisiae (strain ATCC 204508 / S288c) (Baker's yeast) protein is E3 ubiquitin-protein ligase MAG2.